Reading from the N-terminus, the 569-residue chain is Carboxylesterase 3 (569 aa).

The signal sequence occupies residues 1 to 24; that stretch reads MRLHRLRARLNAVAFGLLLLLVHG. Cysteine 95 and cysteine 122 are joined by a disulfide. Asparagine 103 carries N-linked (GlcNAc...) asparagine glycosylation. Serine 227 (acyl-ester intermediate) is an active-site residue. A disulfide bridge connects residues cysteine 279 and cysteine 290. Catalysis depends on charge relay system residues glutamate 345 and histidine 458. The Prevents secretion from ER signature appears at 566-569; the sequence is QEDL.

This sequence belongs to the type-B carboxylesterase/lipase family. Post-translationally, N-glycosylated.

It is found in the endoplasmic reticulum lumen. It catalyses the reaction a carboxylic ester + H2O = an alcohol + a carboxylate + H(+). Involved in the detoxification of xenobiotics and in the activation of ester and amide prodrugs. The protein is Carboxylesterase 3 (CES3) of Pongo abelii (Sumatran orangutan).